Reading from the N-terminus, the 448-residue chain is MLSLKTLLCTLLTVSSVLATPVPARDPSSIQFVHEENKKRYYDYDHGSLGEPIRGVNIGGWLLLEPYITPSLFEAFRTNDDNDEGIPVDEYHFCQYLGKDLAKSRLQSHWSTFYQEQDFANIASQGFNLVRIPIGYWAFQTLDDDPYVSGLQESYLDQAIGWARNNSLKVWVDLHGAAGSQNGFDNSGLRDSYKFLEDSNLAVTTNVLNYILKKYSAEEYLDTVIGIELINEPLGPVLDMDKMKNDYLAPAYEYLRNNIKSDQVIIIHDAFQPYNYWDDFMTENDGYWGVTIDHHHYQVFASDQLERSIDEHIKVACEWGTGVLNESHWTVCGEFAAALTDCTKWLNSVGFGARYDGSWVNGDQTSSYIGSCANNDDIAYWSDERKENTRRYVEAQLDAFEMRGGWIIWCYKTESSLEWDAQRLMFNGLFPQPLTDRKYPNQCGTISN.

An N-terminal signal peptide occupies residues 1–19 (MLSLKTLLCTLLTVSSVLA). Residues 20–40 (TPVPARDPSSIQFVHEENKKR) constitute a propeptide that is removed on maturation. N-linked (GlcNAc...) asparagine glycosylation occurs at asparagine 165. Glutamate 232 functions as the Proton donor in the catalytic mechanism. A glycan (N-linked (GlcNAc...) asparagine) is linked at asparagine 325. The active-site Nucleophile is glutamate 334.

The protein belongs to the glycosyl hydrolase 5 (cellulase A) family.

The protein localises to the secreted. It localises to the cell wall. It catalyses the reaction Successive hydrolysis of beta-D-glucose units from the non-reducing ends of (1-&gt;3)-beta-D-glucans, releasing alpha-glucose.. Functionally, glucanases possibly play a role in cell expansion during growth, in cell-cell fusion during mating, and in spore release during sporulation. This enzyme hydrolyzes both 1,3-beta- and 1,6-beta-linkages and even has beta-glucosidase activity. It could also function biosynthetically as a transglycosylase. This is Glucan 1,3-beta-glucosidase I/II (EXG1) from Saccharomyces cerevisiae (strain ATCC 204508 / S288c) (Baker's yeast).